Reading from the N-terminus, the 436-residue chain is Autophagy-related protein 18 (436 aa).

WD repeat units follow at residues 192-232, 237-276, and 374-414; these read AHRS…KLYQ, SMPSRIFSMSFNTTSTLLCVSSSTETIHLFKLSHPTSSPD, and GNNG…GGEG. A L/FRRG motif motif is present at residues 233–237; sequence FRRGS. Residues 268 to 315 are disordered; the sequence is LSHPTSSPDTSPSSPVGRDRSLSQSSSGYSPDRGDLTGDVGSSDFPAR. The segment covering 269–282 has biased composition (low complexity); sequence SHPTSSPDTSPSSP.

Belongs to the WD repeat PROPPIN family. In terms of assembly, component of the PI(3,5)P2 regulatory complex.

Its subcellular location is the preautophagosomal structure membrane. The protein localises to the vacuole membrane. It localises to the endosome membrane. Functionally, the PI(3,5)P2 regulatory complex regulates both the synthesis and turnover of phosphatidylinositol 3,5-bisphosphate (PtdIns(3,5)P2). Necessary for proper vacuole morphology. Plays an important role in osmotically-induced vacuole fragmentation. Required for cytoplasm to vacuole transport (Cvt) vesicle formation, pexophagy and starvation-induced autophagy. Involved in correct atg9 trafficking to the pre-autophagosomal structure. Might also be involved in premeiotic DNA replication. This chain is Autophagy-related protein 18 (atg18), found in Aspergillus fumigatus (strain ATCC MYA-4609 / CBS 101355 / FGSC A1100 / Af293) (Neosartorya fumigata).